Reading from the N-terminus, the 495-residue chain is Keratin, type II cuticular 87 (495 aa).

Positions 1-111 are head; the sequence is MSCFSSRLGA…PNAQCVKHEE (111 aa). The IF rod domain maps to 111-422; that stretch reads EKEQIKCLNS…RLLEGEEQRL (312 aa). Residues 112-146 form a coil 1A region; that stretch reads KEQIKCLNSKFAAFIDKVRFLEQQNKLLETKWQFY. A linker 1 region spans residues 147 to 156; that stretch reads QNRKCCESNM. Positions 157-257 are coil 1B; sequence EPLFEGYIEA…YEEETRLLHS (101 aa). Residues 258–274 are linker 12; the sequence is HISDTSVVVKMDNSRDL. Positions 275–418 are coil 2; that stretch reads NMDCVVAEIK…ITYRRLLEGE (144 aa). The tract at residues 419–494 is tail; that stretch reads EQRLCEGVGS…TCGSSRSVRF (76 aa).

This sequence belongs to the intermediate filament family. In terms of assembly, heterotetramer of two type I and two type II keratins.

This Mus musculus (Mouse) protein is Keratin, type II cuticular 87.